We begin with the raw amino-acid sequence, 424 residues long: 26S proteasome regulatory subunit 4 homolog (424 aa).

Basic and acidic residues predominate over residues 1–11 (MSRDKSERDNL). A disordered region spans residues 1-33 (MSRDKSERDNLQDTTTINLRRRRRVKEGKAASK). 210–217 (GLPGTGKT) is an ATP binding site.

It belongs to the AAA ATPase family. As to quaternary structure, the 26S proteasome consists of a 20S proteasome core and two 19S regulatory subunits. The 20S proteasome core is composed of 28 subunits that are arranged in four stacked rings, resulting in a barrel-shaped structure. The two end rings are each formed by seven alpha subunits, and the two central rings are each formed by seven beta subunits. The catalytic chamber with the active sites is on the inside of the barrel.

It localises to the cytoplasm. The protein localises to the nucleus. In terms of biological role, acts as a regulatory subunit of the 26S proteasome which degrades poly-ubiquitinated proteins in the cytoplasm and in the nucleus. It is essential for the regulated turnover of proteins and for the removal of misfolded proteins. The proteasome is a multicatalytic proteinase complex that is characterized by its ability to cleave peptides with Arg, Phe, Tyr, Leu, and Glu adjacent to the leaving group at neutral or slightly basic pH. The chain is 26S proteasome regulatory subunit 4 homolog (RPT2) from Encephalitozoon cuniculi (strain GB-M1) (Microsporidian parasite).